We begin with the raw amino-acid sequence, 423 residues long: Galactosylceramide sulfotransferase (423 aa).

Topologically, residues 1-14 are cytoplasmic; that stretch reads MPLPQKKRWESMAK. A helical; Signal-anchor for type II membrane protein transmembrane segment spans residues 15-35; that stretch reads GLVLGALFTSFLLLLYSYAVP. The Lumenal segment spans residues 36–423; sequence PLYTGLASTT…WKFIRDFLRW (388 aa). The tract at residues 48–70 is disordered; that stretch reads GAAPCSPAPREPEAPTSANGSAG. N-linked (GlcNAc...) asparagine glycosylation is found at asparagine 66, asparagine 156, and asparagine 312.

Belongs to the galactose-3-O-sulfotransferase family.

Its subcellular location is the golgi apparatus membrane. The enzyme catalyses a beta-D-galactosyl-(1&lt;-&gt;1')-N-acylsphing-4-enine + 3'-phosphoadenylyl sulfate = an N-acyl-1-beta-D-(3-O-sulfo)-galactosyl-sphing-4-enine + adenosine 3',5'-bisphosphate + H(+). The catalysed reaction is a 1-O-alkyl-2-acyl-3-O-(beta-D-galactosyl)-sn-glycerol + 3'-phosphoadenylyl sulfate = a 1-O-alkyl-2-acyl-3-(beta-D-3-sulfogalactosyl)-sn-glycerol + adenosine 3',5'-bisphosphate + H(+). It catalyses the reaction a beta-D-Gal-(1&lt;-&gt;1')-ceramide + 3'-phosphoadenylyl sulfate = 1-(3-O-sulfo-beta-D-galactosyl)-ceramide + adenosine 3',5'-bisphosphate + H(+). It carries out the reaction a 1,2-diacyl-3-O-(beta-D-galactosyl)-sn-glycerol + 3'-phosphoadenylyl sulfate = 1,2-diacyl-3-(3-O-sulfo-beta-D-galactosyl)-sn-glycerol + adenosine 3',5'-bisphosphate + H(+). The enzyme catalyses a beta-D-Gal-(1-&gt;4)-beta-D-Glc-(1&lt;-&gt;1)-Cer(d18:1(4E)) + 3'-phosphoadenylyl sulfate = beta-D-3-sulfogalactosyl-(1-&gt;4)-beta-D-glucosyl-(1&lt;-&gt;1')-N-acylsphing-4-enine + adenosine 3',5'-bisphosphate + H(+). The protein operates within lipid metabolism; sphingolipid metabolism. Catalyzes the transfer of a sulfate group to position 3 of non-reducing beta-galactosyl residues in glycerolipids and sphingolipids, therefore participates in the biosynthesis of sulfoglycolipids. Catalyzes the synthesis of galactosylceramide sulfate (sulfatide), a major lipid component of the myelin sheath and of monogalactosylalkylacylglycerol sulfate (seminolipid), present in spermatocytes. Seems to prefer beta-glycosides at the non-reducing termini of sugar chains attached to a lipid moiety. Also acts on lactosylceramide, galactosyl 1-alkyl-2-sn-glycerol and galactosyl diacylglycerol (in vitro). The chain is Galactosylceramide sulfotransferase from Bos taurus (Bovine).